Reading from the N-terminus, the 176-residue chain is ATP synthase subunit b (176 aa).

Residues 14–34 (STTLGTMIVVSGAFLILMLLL) form a helical membrane-spanning segment.

It belongs to the ATPase B chain family. As to quaternary structure, F-type ATPases have 2 components, F(1) - the catalytic core - and F(0) - the membrane proton channel. F(1) has five subunits: alpha(3), beta(3), gamma(1), delta(1), epsilon(1). F(0) has three main subunits: a(1), b(2) and c(10-14). The alpha and beta chains form an alternating ring which encloses part of the gamma chain. F(1) is attached to F(0) by a central stalk formed by the gamma and epsilon chains, while a peripheral stalk is formed by the delta and b chains.

It is found in the cell membrane. Functionally, f(1)F(0) ATP synthase produces ATP from ADP in the presence of a proton or sodium gradient. F-type ATPases consist of two structural domains, F(1) containing the extramembraneous catalytic core and F(0) containing the membrane proton channel, linked together by a central stalk and a peripheral stalk. During catalysis, ATP synthesis in the catalytic domain of F(1) is coupled via a rotary mechanism of the central stalk subunits to proton translocation. Its function is as follows. Component of the F(0) channel, it forms part of the peripheral stalk, linking F(1) to F(0). In Enterococcus faecalis (strain ATCC 700802 / V583), this protein is ATP synthase subunit b.